Consider the following 256-residue polypeptide: Acetyl-coenzyme A carboxylase carboxyl transferase subunit alpha (256 aa).

Positions M1–E236 constitute a CoA carboxyltransferase C-terminal domain.

Belongs to the AccA family. In terms of assembly, acetyl-CoA carboxylase is a heterohexamer composed of biotin carboxyl carrier protein (AccB), biotin carboxylase (AccC) and two subunits each of ACCase subunit alpha (AccA) and ACCase subunit beta (AccD).

The protein resides in the cytoplasm. The enzyme catalyses N(6)-carboxybiotinyl-L-lysyl-[protein] + acetyl-CoA = N(6)-biotinyl-L-lysyl-[protein] + malonyl-CoA. The protein operates within lipid metabolism; malonyl-CoA biosynthesis; malonyl-CoA from acetyl-CoA: step 1/1. Functionally, component of the acetyl coenzyme A carboxylase (ACC) complex. First, biotin carboxylase catalyzes the carboxylation of biotin on its carrier protein (BCCP) and then the CO(2) group is transferred by the carboxyltransferase to acetyl-CoA to form malonyl-CoA. The polypeptide is Acetyl-coenzyme A carboxylase carboxyl transferase subunit alpha (Streptococcus thermophilus (strain ATCC BAA-491 / LMD-9)).